Reading from the N-terminus, the 468-residue chain is ATP synthase subunit beta (468 aa).

Residue 156–163 (GGAGVGKT) participates in ATP binding.

It belongs to the ATPase alpha/beta chains family. F-type ATPases have 2 components, CF(1) - the catalytic core - and CF(0) - the membrane proton channel. CF(1) has five subunits: alpha(3), beta(3), gamma(1), delta(1), epsilon(1). CF(0) has three main subunits: a(1), b(2) and c(9-12). The alpha and beta chains form an alternating ring which encloses part of the gamma chain. CF(1) is attached to CF(0) by a central stalk formed by the gamma and epsilon chains, while a peripheral stalk is formed by the delta and b chains.

It localises to the cell inner membrane. The catalysed reaction is ATP + H2O + 4 H(+)(in) = ADP + phosphate + 5 H(+)(out). Its function is as follows. Produces ATP from ADP in the presence of a proton gradient across the membrane. The catalytic sites are hosted primarily by the beta subunits. In Sulfurimonas denitrificans (strain ATCC 33889 / DSM 1251) (Thiomicrospira denitrificans (strain ATCC 33889 / DSM 1251)), this protein is ATP synthase subunit beta.